Reading from the N-terminus, the 339-residue chain is Transcription initiation factor IIB (339 aa).

Residues 39-70 (EELICPVCGSKNIIKDYERAEIVCEMCGCVLQ) form a TFIIB-type zinc finger. The Zn(2+) site is built by C43, C46, C62, and C65. A run of 2 repeats spans residues 156–239 (SELD…SREL) and 250–331 (DYVP…ELTE).

The protein belongs to the TFIIB family.

Stabilizes TBP binding to an archaeal box-A promoter. Also responsible for recruiting RNA polymerase II to the pre-initiation complex (DNA-TBP-TFIIB). The protein is Transcription initiation factor IIB of Methanococcus maripaludis (strain C7 / ATCC BAA-1331).